The sequence spans 435 residues: Ribulose bisphosphate carboxylase/oxygenase activase 2, chloroplastic (435 aa).

The N-terminal 56 residues, methionine 1–valine 56, are a transit peptide targeting the chloroplast. Residue glycine 165–serine 172 coordinates ATP.

Belongs to the RuBisCO activase family.

It localises to the plastid. The protein localises to the chloroplast stroma. Activation of RuBisCO (ribulose-1,5-bisphosphate carboxylase/oxygenase; EC 4.1.1.39) involves the ATP-dependent carboxylation of the epsilon-amino group of lysine leading to a carbamate structure. In Larrea tridentata (Creosote bush), this protein is Ribulose bisphosphate carboxylase/oxygenase activase 2, chloroplastic (RCA2).